Reading from the N-terminus, the 702-residue chain is Methionine--tRNA ligase (702 aa).

Residues 14 to 24 (PYANGPVHLGH) carry the 'HIGH' region motif. Zn(2+)-binding residues include C146, C149, C159, and C162. The 'KMSKS' region motif lies at 344-348 (KFSKS). Position 347 (K347) interacts with ATP. The tRNA-binding domain maps to 601–702 (DFQKVDLRVA…GEKINGQSVQ (102 aa)).

This sequence belongs to the class-I aminoacyl-tRNA synthetase family. MetG type 1 subfamily. In terms of assembly, homodimer. Requires Zn(2+) as cofactor.

The protein resides in the cytoplasm. It catalyses the reaction tRNA(Met) + L-methionine + ATP = L-methionyl-tRNA(Met) + AMP + diphosphate. Is required not only for elongation of protein synthesis but also for the initiation of all mRNA translation through initiator tRNA(fMet) aminoacylation. The protein is Methionine--tRNA ligase of Chlorobium luteolum (strain DSM 273 / BCRC 81028 / 2530) (Pelodictyon luteolum).